The chain runs to 362 residues: Probable endopolygalacturonase II (362 aa).

An N-terminal signal peptide occupies residues 1–20 (MHSFASLLAYGLAAGATLAS). The propeptide occupies 21-27 (ASPIEAR). An intrachain disulfide couples C30 to C45. Residues 156-186 (SDDITLTDITINNADGDSLGGHNTDAFDVGN) form a PbH1 1 repeat. D201 (proton donor) is an active-site residue. C203 and C219 form a disulfide bridge. 4 PbH1 repeats span residues 209-229 (GENI…SIGS), 238-259 (VKNV…RIKT), 267-289 (VSEI…VIQQ), and 301-322 (TNGV…DSKA). H223 is a catalytic residue. A glycan (N-linked (GlcNAc...) asparagine) is linked at N240. Disulfide bonds link C329–C334 and C353–C362.

This sequence belongs to the glycosyl hydrolase 28 family.

Its subcellular location is the secreted. The enzyme catalyses (1,4-alpha-D-galacturonosyl)n+m + H2O = (1,4-alpha-D-galacturonosyl)n + (1,4-alpha-D-galacturonosyl)m.. In terms of biological role, involved in maceration and soft-rotting of plant tissue. Hydrolyzes the 1,4-alpha glycosidic bonds of de-esterified pectate in the smooth region of the plant cell wall. This Aspergillus kawachii (strain NBRC 4308) (White koji mold) protein is Probable endopolygalacturonase II (pgaII).